We begin with the raw amino-acid sequence, 159 residues long: Globin CTT-W (159 aa).

Residues 1 to 16 form the signal peptide; that stretch reads MKFLVILTLCIAGAIA. The 143-residue stretch at 17 to 159 folds into the Globin domain; sequence HCDKAPFIKA…HHAIVYSILE (143 aa). Heme b is bound by residues H73 and H108.

It belongs to the globin family.

This chain is Globin CTT-W (CTT-W), found in Chironomus thummi piger (Midge).